The chain runs to 353 residues: Photosystem II D2 protein (353 aa).

Threonine 2 is modified (N-acetylthreonine). Threonine 2 carries the post-translational modification Phosphothreonine. The chain crosses the membrane as a helical span at residues 41 to 61 (CAYFALGGWLTGTTFVTSWYT). Residue histidine 118 coordinates chlorophyll a. The helical transmembrane segment at 125 to 141 (GFMLRQFEIARSVQLRP) threads the bilayer. 2 residues coordinate pheophytin a: glutamine 130 and asparagine 143. The chain crosses the membrane as a helical span at residues 153–166 (VFVSVFLIYPLGQS). Histidine 198 is a binding site for chlorophyll a. Residues 208-228 (AALLCAIHGATVENTIFEDGD) traverse the membrane as a helical segment. Positions 215 and 262 each coordinate a plastoquinone. A Fe cation-binding site is contributed by histidine 215. Histidine 269 lines the Fe cation pocket. Residues 279–295 (GLWMSAVGVVGLAVNLR) form a helical membrane-spanning segment.

This sequence belongs to the reaction center PufL/M/PsbA/D family. As to quaternary structure, PSII is composed of 1 copy each of membrane proteins PsbA, PsbB, PsbC, PsbD, PsbE, PsbF, PsbH, PsbI, PsbJ, PsbK, PsbL, PsbM, PsbT, PsbX, PsbY, PsbZ, Psb30/Ycf12, at least 3 peripheral proteins of the oxygen-evolving complex and a large number of cofactors. It forms dimeric complexes. The cofactor is The D1/D2 heterodimer binds P680, chlorophylls that are the primary electron donor of PSII, and subsequent electron acceptors. It shares a non-heme iron and each subunit binds pheophytin, quinone, additional chlorophylls, carotenoids and lipids. There is also a Cl(-1) ion associated with D1 and D2, which is required for oxygen evolution. The PSII complex binds additional chlorophylls, carotenoids and specific lipids..

The protein resides in the plastid. Its subcellular location is the chloroplast thylakoid membrane. The enzyme catalyses 2 a plastoquinone + 4 hnu + 2 H2O = 2 a plastoquinol + O2. Photosystem II (PSII) is a light-driven water:plastoquinone oxidoreductase that uses light energy to abstract electrons from H(2)O, generating O(2) and a proton gradient subsequently used for ATP formation. It consists of a core antenna complex that captures photons, and an electron transfer chain that converts photonic excitation into a charge separation. The D1/D2 (PsbA/PsbD) reaction center heterodimer binds P680, the primary electron donor of PSII as well as several subsequent electron acceptors. D2 is needed for assembly of a stable PSII complex. The chain is Photosystem II D2 protein from Chaetosphaeridium globosum (Charophycean green alga).